The following is a 331-amino-acid chain: Meiotic recombination protein W68 (331 aa).

Residues 1–120 (MDEFSENIER…LGILAASKGL (120 aa)) enclose the Topo IIA-type catalytic domain. Tyrosine 81 (O-(5'-phospho-DNA)-tyrosine intermediate) is an active-site residue. Residues glutamate 167 and aspartate 221 each coordinate Mg(2+).

The protein belongs to the TOP6A family. Mg(2+) is required as a cofactor.

Its subcellular location is the nucleus. The enzyme catalyses ATP-dependent breakage, passage and rejoining of double-stranded DNA.. Functionally, required for meiotic recombination. Together with mei-P22, mediates DNA cleavage that forms the double-strand breaks (DSB) that initiate meiotic recombination. This is Meiotic recombination protein W68 from Drosophila melanogaster (Fruit fly).